A 666-amino-acid chain; its full sequence is Non-receptor tyrosine-protein kinase TNK1 (666 aa).

Phosphoserine is present on residues Ser-60 and Ser-96. The Protein kinase domain maps to 116 to 377 (VCRGELLGSG…PSFSHLEGLL (262 aa)). ATP-binding positions include 122-130 (LGSGCFGVV) and Lys-148. Asp-245 serves as the catalytic Proton acceptor. Residues Ser-255 and Ser-411 each carry the phosphoserine modification. In terms of domain architecture, SH3 spans 380–445 (AGPSEACCVR…PASAVTLADA (66 aa)). Positions 446–493 (GGLPATRPVHRGTPARGDQHPGSIDGDRKKANLWDAPPARGQRRNMPL) are disordered. Ser-502 is modified (phosphoserine). A disordered region spans residues 506–579 (VLSLGPRPTG…MGMPGARKAA (74 aa)). Position 514 is a phosphothreonine (Thr-514). Ser-519 bears the Phosphoserine mark. Residues 531 to 541 (QGPPGLPPRPP) show a composition bias toward pro residues. A compositionally biased stretch (low complexity) spans 542-552 (LSSSSPQPSQP). Phosphoserine is present on Ser-582.

This sequence belongs to the protein kinase superfamily. Tyr protein kinase family. Interacts with the SH3 domain of PLCG1 via its Pro-rich domain. Post-translationally, autophosphorylated on tyrosine residues. As to expression, expressed in all umbilical cord blood, bone marrow and adult blood cell sub-populations and in several leukemia cell lines. Highly expressed in fetal blood, brain, lung, liver and kidney. Detected at lower levels in adult prostate, testis, ovary, small intestine and colon. Not expressed in adult lung, liver, kidney or brain.

It is found in the cytoplasm. It localises to the membrane. It catalyses the reaction L-tyrosyl-[protein] + ATP = O-phospho-L-tyrosyl-[protein] + ADP + H(+). Its function is as follows. Involved in negative regulation of cell growth. Has tumor suppressor properties. Plays a negative regulatory role in the Ras-MAPK pathway. May function in signaling pathways utilized broadly during fetal development and more selectively in adult tissues and in cells of the lymphohematopoietic system. Could specifically be involved in phospholipid signal transduction. This chain is Non-receptor tyrosine-protein kinase TNK1, found in Homo sapiens (Human).